Consider the following 290-residue polypeptide: ATP synthase subunit a (290 aa).

Helical transmembrane passes span 54–74 (AVHL…ILLF), 115–135 (IAPL…LKWI), 136–156 (PVDY…KIVP), 164–184 (FGLS…VKGF), 201–221 (LVPF…LSLA), 233–253 (VVFI…NVPW), and 254–274 (AIFH…LTVV).

Belongs to the ATPase A chain family. As to quaternary structure, F-type ATPases have 2 components, CF(1) - the catalytic core - and CF(0) - the membrane proton channel. CF(1) has five subunits: alpha(3), beta(3), gamma(1), delta(1), epsilon(1). CF(0) has three main subunits: a(1), b(2) and c(9-12). The alpha and beta chains form an alternating ring which encloses part of the gamma chain. CF(1) is attached to CF(0) by a central stalk formed by the gamma and epsilon chains, while a peripheral stalk is formed by the delta and b chains.

It localises to the cell inner membrane. Key component of the proton channel; it plays a direct role in the translocation of protons across the membrane. The chain is ATP synthase subunit a from Stutzerimonas stutzeri (strain A1501) (Pseudomonas stutzeri).